We begin with the raw amino-acid sequence, 658 residues long: Probable transketolase (658 aa).

H24 provides a ligand contact to substrate. Residues H64 and 113–115 (GPL) contribute to the thiamine diphosphate site. D154 is a binding site for Mg(2+). Thiamine diphosphate-binding residues include G155 and N184. The Mg(2+) site is built by N184 and I186. Positions 259, 354, and 381 each coordinate substrate. Residue H259 coordinates thiamine diphosphate. E408 acts as the Proton donor in catalysis. F434 is a binding site for thiamine diphosphate. Substrate-binding residues include H458, D466, and R517.

It belongs to the transketolase family. As to quaternary structure, homodimer. Requires Mg(2+) as cofactor. Ca(2+) serves as cofactor. The cofactor is Mn(2+). It depends on Co(2+) as a cofactor. Thiamine diphosphate is required as a cofactor.

It carries out the reaction D-sedoheptulose 7-phosphate + D-glyceraldehyde 3-phosphate = aldehydo-D-ribose 5-phosphate + D-xylulose 5-phosphate. Functionally, necessary for high-efficiency recombination chromosomal DNA during genetic transformation. Catalyzes the transfer of a two-carbon ketol group from a ketose donor to an aldose acceptor, via a covalent intermediate with the cofactor thiamine pyrophosphate. This chain is Probable transketolase (tkt), found in Streptococcus pneumoniae serotype 4 (strain ATCC BAA-334 / TIGR4).